Here is a 133-residue protein sequence, read N- to C-terminus: C-C motif chemokine 21b (133 aa).

The N-terminal stretch at 1–23 (MAQMMTLSLLSLVLALCIPWTQG) is a signal peptide. Intrachain disulfides connect C31-C57, C32-C75, and C103-C122. Residues 87–133 (MRRLDQPPAPGKQSPGCRKNRGTSKSGKKGKGSKGCKRTEQTQPSRG) are disordered. The C-terminal basic extension stretch occupies residues 98 to 133 (KQSPGCRKNRGTSKSGKKGKGSKGCKRTEQTQPSRG). Positions 104 to 122 (RKNRGTSKSGKKGKGSKGC) are enriched in basic residues.

It belongs to the intercrine beta (chemokine CC) family. Binds to CCR7 and to CXCR3. Interacts with PDPN; relocalizes PDPN to the basolateral membrane. Interacts with GPR174. As to expression, expressed strongly in lung, spleen, thymus, peripheral and mesentric lymph nodes. Also expressed in the testis, kidney, liver, and heart.

It is found in the secreted. Inhibits hemopoiesis and stimulates chemotaxis. Chemotactic in vitro for thymocytes and activated T-cells, but not for B-cells, macrophages, or neutrophils. Potent mesangial cell chemoattractant. Shows preferential activity towards naive T-cells. May play a role in mediating homing of lymphocytes to secondary lymphoid organs. This is C-C motif chemokine 21b (Ccl21b) from Mus musculus (Mouse).